A 307-amino-acid chain; its full sequence is Quinolinate synthase (307 aa).

Positions 23 and 40 each coordinate iminosuccinate. Cys-86 provides a ligand contact to [4Fe-4S] cluster. Iminosuccinate-binding positions include Tyr-112–Asn-114 and Ser-129. Cys-173 is a [4Fe-4S] cluster binding site. Iminosuccinate contacts are provided by residues His-199–Glu-201 and Thr-216. Cys-265 is a binding site for [4Fe-4S] cluster.

This sequence belongs to the quinolinate synthase family. Type 2 subfamily. [4Fe-4S] cluster is required as a cofactor.

It localises to the cytoplasm. The enzyme catalyses iminosuccinate + dihydroxyacetone phosphate = quinolinate + phosphate + 2 H2O + H(+). The protein operates within cofactor biosynthesis; NAD(+) biosynthesis; quinolinate from iminoaspartate: step 1/1. Catalyzes the condensation of iminoaspartate with dihydroxyacetone phosphate to form quinolinate. This is Quinolinate synthase from Methanocaldococcus jannaschii (strain ATCC 43067 / DSM 2661 / JAL-1 / JCM 10045 / NBRC 100440) (Methanococcus jannaschii).